The chain runs to 206 residues: Fibroblast growth factor 4 (206 aa).

The N-terminal stretch at 1-30 (MSGPGTAAVALLPAVLLALLAPWAGRGGAA) is a signal peptide.

This sequence belongs to the heparin-binding growth factors family. Interacts with FGFR1, FGFR2, FGFR3 and FGFR4. Affinity between fibroblast growth factors (FGFs) and their receptors is increased by heparan sulfate glycosaminoglycans that function as coreceptors.

It localises to the secreted. Functionally, plays an important role in the regulation of embryonic development, cell proliferation, and cell differentiation. Required for normal limb and cardiac valve development during embryogenesis. May play a role in embryonic molar tooth bud development via inducing the expression of MSX1, MSX2 and MSX1-mediated expression of SDC1 in dental mesenchyme cells. The chain is Fibroblast growth factor 4 from Homo sapiens (Human).